A 162-amino-acid chain; its full sequence is MDKVNSCCCGVNAKPCCTDPNSGCCCVSKTDNCCKSDTKECCTGTGEGCKCVNCKCCKPQANCCCGVNAKPCCFDPNSGCCCVSKTNNCCKSDTKECCTGTGEGCKCTSCQCCKPVQQGCCCGDKAKACCTDPNSGCCCSNKANKCCDATSKQECQTCQCCK.

Positions 1-2 are excised as a propeptide; the sequence is MD.

Its function is as follows. The metallothioneins are involved in the cellular sequestration of toxic metal ions. This is Cadmium metallothionein (MTT1) from Tetrahymena thermophila.